We begin with the raw amino-acid sequence, 222 residues long: Beta-amylase (222 aa).

Thr36 contacts substrate. Catalysis depends on Glu74, which acts as the Proton acceptor. Substrate contacts are provided by residues 75–76 (NA) and Arg114.

The protein belongs to the glycosyl hydrolase 14 family.

It carries out the reaction Hydrolysis of (1-&gt;4)-alpha-D-glucosidic linkages in polysaccharides so as to remove successive maltose units from the non-reducing ends of the chains.. The protein is Beta-amylase (BMY1) of Secale cereale (Rye).